We begin with the raw amino-acid sequence, 258 residues long: Ribosomal RNA small subunit methyltransferase J (258 aa).

Residues 123-124 and D177 each bind S-adenosyl-L-methionine; that span reads ER. The segment at 232–258 is disordered; that stretch reads IDGPKPSHSLEGKSSRYDIYPKKALKA. The span at 239 to 252 shows a compositional bias: basic and acidic residues; the sequence is HSLEGKSSRYDIYP.

The protein belongs to the methyltransferase superfamily. RsmJ family.

Its subcellular location is the cytoplasm. It carries out the reaction guanosine(1516) in 16S rRNA + S-adenosyl-L-methionine = N(2)-methylguanosine(1516) in 16S rRNA + S-adenosyl-L-homocysteine + H(+). In terms of biological role, specifically methylates the guanosine in position 1516 of 16S rRNA. This is Ribosomal RNA small subunit methyltransferase J from Pseudomonas putida (strain GB-1).